Here is a 199-residue protein sequence, read N- to C-terminus: HTH-type transcriptional repressor NemR (199 aa).

Positions 7-67 constitute an HTH tetR-type domain; that stretch reads HDTREHLLAT…AMLERHYAAY (61 aa). A DNA-binding region (H-T-H motif) is located at residues 30 to 49; the sequence is GLSELLKTAEVPKGSFYHYF.

Involved in response to both electrophiles and reactive chlorine species (RCS). Represses the transcription of the nemRA-gloA operon by binding to the NemR box. The chain is HTH-type transcriptional repressor NemR (nemR) from Escherichia coli O6:H1 (strain CFT073 / ATCC 700928 / UPEC).